A 50-amino-acid polypeptide reads, in one-letter code: MLNLNFTNITVMGILPEAYAPFDPIVDILPIIPILFFLLAFVWQAAVKFR.

The propeptide occupies 1–13; it reads MLNLNFTNITVMG. The chain crosses the membrane as a helical span at residues 25-45; sequence IVDILPIIPILFFLLAFVWQA.

The protein belongs to the PsbK family. In terms of assembly, PSII is composed of 1 copy each of membrane proteins PsbA, PsbB, PsbC, PsbD, PsbE, PsbF, PsbH, PsbI, PsbJ, PsbK, PsbL, PsbM, PsbT, PsbY, PsbZ, Psb30/Ycf12, at least 3 peripheral proteins of the oxygen-evolving complex and a large number of cofactors. It forms dimeric complexes.

The protein localises to the plastid. Its subcellular location is the chloroplast thylakoid membrane. Functionally, one of the components of the core complex of photosystem II (PSII). PSII is a light-driven water:plastoquinone oxidoreductase that uses light energy to abstract electrons from H(2)O, generating O(2) and a proton gradient subsequently used for ATP formation. It consists of a core antenna complex that captures photons, and an electron transfer chain that converts photonic excitation into a charge separation. This Euglena myxocylindracea protein is Photosystem II reaction center protein K.